The primary structure comprises 317 residues: Putative 2-hydroxyacid dehydrogenase SA2098 (317 aa).

NAD(+) is bound by residues 155 to 156, 234 to 236, and Asp-260; these read EI and ASR. Arg-236 is an active-site residue. Glu-265 is a catalytic residue. His-283 functions as the Proton donor in the catalytic mechanism. 283 to 286 is an NAD(+) binding site; sequence HIGN.

Belongs to the D-isomer specific 2-hydroxyacid dehydrogenase family.

The polypeptide is Putative 2-hydroxyacid dehydrogenase SA2098 (Staphylococcus aureus (strain N315)).